The sequence spans 227 residues: Atypical response regulator protein ChxR (227 aa).

A Response regulatory domain is found at 6–108; it reads HVLLVSEHWD…ILKSAISLFL (103 aa). A DNA-binding region (ompR/PhoB-type) is located at residues 117 to 213; sequence PESIRFGPNV…LRGVGYLFSD (97 aa).

Homodimer.

Its function is as follows. May be a global positive regulator of transcription. Binds a cis-acting element of its own promoter DNA sequence and is hence probably also involved in its own transcription activation. The recognition sequence is 5'-WHGAWNH-N(3-5)-WHGAWNH-3', where W is A/T, H is C/A/T, N is G/C/A/T and the linker length in the middle is 3 to 5 nucleotides. In Chlamydia trachomatis serovar L2 (strain ATCC VR-902B / DSM 19102 / 434/Bu), this protein is Atypical response regulator protein ChxR.